The following is a 126-amino-acid chain: Small ribosomal subunit protein uS13 (126 aa).

Residues 99-126 (LRGQSTKNNARTRKGKRKTVANKKRVTK) are disordered. Positions 108 to 126 (ARTRKGKRKTVANKKRVTK) are enriched in basic residues.

It belongs to the universal ribosomal protein uS13 family. In terms of assembly, part of the 30S ribosomal subunit. Forms a loose heterodimer with protein S19. Forms two bridges to the 50S subunit in the 70S ribosome.

Its function is as follows. Located at the top of the head of the 30S subunit, it contacts several helices of the 16S rRNA. In the 70S ribosome it contacts the 23S rRNA (bridge B1a) and protein L5 of the 50S subunit (bridge B1b), connecting the 2 subunits; these bridges are implicated in subunit movement. Contacts the tRNAs in the A and P-sites. The chain is Small ribosomal subunit protein uS13 from Azobacteroides pseudotrichonymphae genomovar. CFP2.